Reading from the N-terminus, the 289-residue chain is Dihydropteroate synthase (289 aa).

The region spanning 28–282 (TYVMGILNTT…DVEAMAQICK (255 aa)) is the Pterin-binding domain. Residue asparagine 35 coordinates Mg(2+). (7,8-dihydropterin-6-yl)methyl diphosphate-binding positions include threonine 75, aspartate 109, asparagine 128, aspartate 199, lysine 235, and 270–272 (RVH).

It belongs to the DHPS family. Mg(2+) serves as cofactor.

The enzyme catalyses (7,8-dihydropterin-6-yl)methyl diphosphate + 4-aminobenzoate = 7,8-dihydropteroate + diphosphate. Its pathway is cofactor biosynthesis; tetrahydrofolate biosynthesis; 7,8-dihydrofolate from 2-amino-4-hydroxy-6-hydroxymethyl-7,8-dihydropteridine diphosphate and 4-aminobenzoate: step 1/2. Its function is as follows. Catalyzes the condensation of para-aminobenzoate (pABA) with 6-hydroxymethyl-7,8-dihydropterin diphosphate (DHPt-PP) to form 7,8-dihydropteroate (H2Pte), the immediate precursor of folate derivatives. The polypeptide is Dihydropteroate synthase (folP) (Synechocystis sp. (strain ATCC 27184 / PCC 6803 / Kazusa)).